The sequence spans 501 residues: G protein-activated inward rectifier potassium channel 1 (501 aa).

The interval 1–40 is disordered; it reads MSALRRKFGDDYQVVTTSSSGSGLQPQGPGQGPQQQLVPK. Residues 1–80 are Cytoplasmic-facing; the sequence is MSALRRKFGD…LFTTLVDLKW (80 aa). Low complexity predominate over residues 18–37; sequence SSSGSGLQPQGPGQGPQQQL. Residues 81–105 traverse the membrane as a helical segment; sequence RWNLFIFILTYTVAWLFMASMWWVI. Residues 106–129 lie on the Extracellular side of the membrane; that stretch reads AYTRGDLNKAHVGNYTPCVANVYN. N-linked (GlcNAc...) asparagine glycosylation occurs at N119. Positions 130–141 form an intramembrane region, helical; Pore-forming; the sequence is FPSAFLFFIETE. The segment at residues 142-148 is an intramembrane region (pore-forming); that stretch reads ATIGYGY. The Selectivity filter signature appears at 143-148; that stretch reads TIGYGY. Residues 149 to 157 are Extracellular-facing; it reads RYITDKCPE. A helical transmembrane segment spans residues 158-179; the sequence is GIILFLFQSILGSIVDAFLIGC. Topologically, residues 180-501 are cytoplasmic; sequence MFIKMSQPKK…LRKMNSDRFT (322 aa). The interval 182–209 is polyphosphoinositide (PIP2)-binding; sequence IKMSQPKKRAETLMFSEHAVISMRDGKL. 2 positions are modified to phosphoserine: S385 and S424.

Belongs to the inward rectifier-type potassium channel (TC 1.A.2.1) family. KCNJ3 subfamily. As to quaternary structure, associates with KCNJ5/GIRK4 or KCNJ6/GIRK2 or KCNJ9/GIRK3 to form a G-protein activated heteromultimer pore-forming unit. The resulting inward current is much larger.

It localises to the membrane. It carries out the reaction K(+)(in) = K(+)(out). Heteromultimer composed of KCNJ3/GIRK1 and KCNJ5/GIRK4 is activated by phosphatidylinositol 4,5 biphosphate (PtdIns(4,5)P2). In terms of biological role, inward rectifier potassium channels are characterized by a greater tendency to allow potassium to flow into the cell rather than out of it. Their voltage dependence is regulated by the concentration of extracellular potassium; as external potassium is raised, the voltage range of the channel opening shifts to more positive voltages. The inward rectification is mainly due to the blockage of outward current by internal magnesium. This potassium channel is controlled by G proteins. This receptor plays a crucial role in regulating the heartbeat. The protein is G protein-activated inward rectifier potassium channel 1 (KCNJ3) of Bos taurus (Bovine).